The primary structure comprises 200 residues: Urease accessory protein UreE (200 aa).

The disordered stretch occupies residues 171 to 200 (HHGHAHPHPHDHDHQHGPGCAHGRHGHDHH).

The protein belongs to the UreE family.

The protein localises to the cytoplasm. In terms of biological role, involved in urease metallocenter assembly. Binds nickel. Probably functions as a nickel donor during metallocenter assembly. The protein is Urease accessory protein UreE of Burkholderia vietnamiensis (strain G4 / LMG 22486) (Burkholderia cepacia (strain R1808)).